A 141-amino-acid chain; its full sequence is Large ribosomal subunit protein uL14 (141 aa).

Belongs to the universal ribosomal protein uL14 family. Part of the 50S ribosomal subunit. Forms a cluster with proteins L3 and L24e, part of which may contact the 16S rRNA in 2 intersubunit bridges.

Binds to 23S rRNA. Forms part of two intersubunit bridges in the 70S ribosome. The sequence is that of Large ribosomal subunit protein uL14 from Pyrococcus horikoshii (strain ATCC 700860 / DSM 12428 / JCM 9974 / NBRC 100139 / OT-3).